The chain runs to 111 residues: ASFDEAPPGNSKAGEKIFKTKCAQCHTVDKGAGHKQGPNLNGLFGRQSGTTPGYSYSAANKNRAVIWEEKTLYDYLLNPKKYIPGTKMVFPGLKKPQDRADLIAYLKEATA.

An N-acetylalanine modification is found at A1. C22, C25, and H26 together coordinate heme c. An N6,N6,N6-trimethyllysine modification is found at K80. M88 serves as a coordination point for heme c. At K94 the chain carries N6,N6,N6-trimethyllysine.

The protein belongs to the cytochrome c family. Binds 1 heme c group covalently per subunit.

The protein resides in the mitochondrion intermembrane space. Functionally, electron carrier protein. The oxidized form of the cytochrome c heme group can accept an electron from the heme group of the cytochrome c1 subunit of cytochrome reductase. Cytochrome c then transfers this electron to the cytochrome oxidase complex, the final protein carrier in the mitochondrial electron-transport chain. The chain is Cytochrome c from Cucurbita maxima (Pumpkin).